We begin with the raw amino-acid sequence, 219 residues long: Counting factor-associated protein C (219 aa).

Positions 1–16 (MKVLILLVSLISVCFS) are cleaved as a signal peptide. N-linked (GlcNAc...) asparagine glycosylation is found at N74 and N123.

It localises to the secreted. The polypeptide is Counting factor-associated protein C (cfaC) (Dictyostelium discoideum (Social amoeba)).